Consider the following 272-residue polypeptide: Acidic leucine-rich nuclear phosphoprotein 32 family member B (272 aa).

4 LRR repeats span residues Pro16–Glu40, Asn43–Pro64, Lys65–Ala84, and Ser89–Lys110. One can recognise an LRRCT domain in the interval Cys123–Glu161. Acidic residues predominate over residues Asp149–Glu254. The disordered stretch occupies residues Asp149–Asp272. A phosphoserine mark is found at Ser164 and Ser171. Over residues Ser255–Thr265 the composition is skewed to basic and acidic residues. The Nuclear localization signal motif lies at Lys260–Arg263. Thr265 carries the phosphothreonine modification.

It belongs to the ANP32 family. Interacts with histones H3 and H4. Interacts with KLF5; this interaction induces promoter region-specific histone incorporation and inhibition of histone acetylation by ANP32B. In terms of processing, some glutamate residues are glycylated by TTLL8. This modification occurs exclusively on glutamate residues and results in a glycine chain on the gamma-carboxyl group. Post-translationally, directly cleaved by caspase-3/CASP3. As to expression, predominantly expressed in brain. Expressed in the entire embryonic brain, whereas in the adult brain its expression is restricted to the subventricular zone where there are neural progenitor cells.

It localises to the nucleus. Multifunctional protein that is involved in the regulation of many processes including cell proliferation, apoptosis, cell cycle progression or transcription. Regulates the proliferation of neuronal stem cells, differentiation of leukemic cells and progression from G1 to S phase of the cell cycle. As negative regulator of caspase-3-dependent apoptosis, may act as an antagonist of ANP32A in regulating tissue homeostasis. Exhibits histone chaperone properties, able to recruit histones to certain promoters, thus regulating the transcription of specific genes. Also plays an essential role in the nucleocytoplasmic transport of specific mRNAs via the uncommon nuclear mRNA export receptor XPO1/CRM1. Participates in the regulation of adequate adaptive immune responses by acting on mRNA expression and cell proliferation. This is Acidic leucine-rich nuclear phosphoprotein 32 family member B (Anp32b) from Rattus norvegicus (Rat).